The primary structure comprises 396 residues: Alpha-galactosidase 2 (396 aa).

The N-terminal stretch at M1 to G25 is a signal peptide. 2 cysteine pairs are disulfide-bonded: C52/C84 and C132/C163. An N-linked (GlcNAc...) asparagine glycan is attached at N55. Substrate-binding positions include D82 to D83 and K159. Catalysis depends on D161, which acts as the Nucleophile. Substrate-binding positions include E194–E198, R212, and D216. D216 serves as the catalytic Proton donor. N-linked (GlcNAc...) asparagine glycosylation is found at N343 and N354.

It belongs to the glycosyl hydrolase 27 family. As to quaternary structure, homodimer.

It is found in the secreted. The protein resides in the cell wall. Its subcellular location is the extracellular space. It localises to the apoplast. The catalysed reaction is Hydrolysis of terminal, non-reducing alpha-D-galactose residues in alpha-D-galactosides, including galactose oligosaccharides, galactomannans and galactolipids.. In terms of biological role, may regulate leaf (and possibly other organ) development by functioning in cell wall loosening and cell wall expansion. This is Alpha-galactosidase 2 from Arabidopsis thaliana (Mouse-ear cress).